The chain runs to 218 residues: Small ribosomal subunit protein uS3 (218 aa).

One can recognise a KH type-2 domain in the interval 40–109 (IRKIINTEYS…DVSINIREVK (70 aa)).

Belongs to the universal ribosomal protein uS3 family. Part of the 30S ribosomal subunit. Forms a tight complex with proteins S10 and S14.

Functionally, binds the lower part of the 30S subunit head. Binds mRNA in the 70S ribosome, positioning it for translation. The polypeptide is Small ribosomal subunit protein uS3 (Orientia tsutsugamushi (strain Boryong) (Rickettsia tsutsugamushi)).